A 271-amino-acid polypeptide reads, in one-letter code: Probable ribosome biogenesis GTPase A (271 aa).

Positions 21 to 175 (HDQLKKLASS…LSDTPGVFFK (155 aa)) constitute a CP-type G domain. GTP is bound by residues 127-132 (NVGKSS) and Gly171.

The protein belongs to the TRAFAC class YlqF/YawG GTPase family. MTG1 subfamily.

It localises to the cytoplasm. Functionally, required for a late step of 50S ribosomal subunit assembly. Has GTPase activity. Binds to the 23S rRNA. The sequence is that of Probable ribosome biogenesis GTPase A (rbgA) from Mycoplasma pneumoniae (strain ATCC 29342 / M129 / Subtype 1) (Mycoplasmoides pneumoniae).